The primary structure comprises 494 residues: Alpha-amylase A (494 aa).

An N-terminal signal peptide occupies residues 1 to 18 (MFLAKSIVCLALLAVANA). Position 19 is a pyrrolidone carboxylic acid (Gln-19). An intrachain disulfide couples Cys-46 to Cys-102. The Ca(2+) site is built by Asn-116, Arg-165, and Asp-174. Residues Cys-153 and Cys-167 are joined by a disulfide bond. Residue Arg-202 participates in chloride binding. The active-site Nucleophile is Asp-204. His-208 contributes to the Ca(2+) binding site. Glu-241 functions as the Proton donor in the catalytic mechanism. Asn-304 and Arg-343 together coordinate chloride. 2 disulfides stabilise this stretch: Cys-376–Cys-382 and Cys-448–Cys-460.

This sequence belongs to the glycosyl hydrolase 13 family. Monomer. Ca(2+) is required as a cofactor. Requires chloride as cofactor.

The catalysed reaction is Endohydrolysis of (1-&gt;4)-alpha-D-glucosidic linkages in polysaccharides containing three or more (1-&gt;4)-alpha-linked D-glucose units.. The protein is Alpha-amylase A (Amy-p) of Drosophila melanogaster (Fruit fly).